Reading from the N-terminus, the 417-residue chain is GTP-binding protein YPT11 (417 aa).

Residues 1-34 (MSQRKRYSLNVVTSPSIPSPTPSAPIRTNESNWE) are disordered. Residues 97-104 (GDANVGKT), 228-232 (DTAGQ), and 292-295 (NKID) each bind GTP. Residues Cys-415 and Cys-416 are each lipidated (S-geranylgeranyl cysteine).

Belongs to the small GTPase superfamily. Rab family. Interacts with MYO2 (via C-terminal tail domain). Interacts with YIF1, YIP3, YIP4 and YIP5.

The protein resides in the endoplasmic reticulum membrane. Its subcellular location is the bud tip. It is found in the bud neck. In terms of biological role, involved in the positive control of both endoplasmic reticulum (ER) and mitochondrion inheritance during cell divison. Required for the MYO2-dependent retention of newly inherited mitochondria at the bud tip in developing daughter cells. The polypeptide is GTP-binding protein YPT11 (YPT11) (Saccharomyces cerevisiae (strain AWRI1631) (Baker's yeast)).